Here is a 410-residue protein sequence, read N- to C-terminus: Cysteine desulfurase (410 aa).

N6-(pyridoxal phosphate)lysine is present on Lys-227. Cys-365 (cysteine persulfide intermediate) is an active-site residue.

Belongs to the class-V pyridoxal-phosphate-dependent aminotransferase family. Csd subfamily. As to quaternary structure, homodimer. Interacts with SufE and the SufBCD complex composed of SufB, SufC and SufD. The interaction with SufE is required to mediate the direct transfer of the sulfur atom from the S-sulfanylcysteine. Pyridoxal 5'-phosphate serves as cofactor.

It is found in the cytoplasm. It catalyses the reaction (sulfur carrier)-H + L-cysteine = (sulfur carrier)-SH + L-alanine. The catalysed reaction is L-selenocysteine + AH2 = hydrogenselenide + L-alanine + A + H(+). Its pathway is cofactor biosynthesis; iron-sulfur cluster biosynthesis. Cysteine desulfurases mobilize the sulfur from L-cysteine to yield L-alanine, an essential step in sulfur metabolism for biosynthesis of a variety of sulfur-containing biomolecules. Component of the suf operon, which is activated and required under specific conditions such as oxidative stress and iron limitation. Acts as a potent selenocysteine lyase in vitro, that mobilizes selenium from L-selenocysteine. Selenocysteine lyase activity is however unsure in vivo. This Wigglesworthia glossinidia brevipalpis protein is Cysteine desulfurase.